We begin with the raw amino-acid sequence, 301 residues long: Probable aspartoacylase (301 aa).

Zn(2+) contacts are provided by His-13 and Glu-16. Substrate is bound by residues Arg-54 and 61-62 (NR). Zn(2+) is bound at residue His-105. Positions 163 and 273 each coordinate substrate.

The protein belongs to the AspA/AstE family. Aspartoacylase subfamily. Zn(2+) is required as a cofactor.

The catalysed reaction is an N-acyl-L-aspartate + H2O = a carboxylate + L-aspartate. In Prochlorococcus marinus (strain MIT 9312), this protein is Probable aspartoacylase.